Consider the following 96-residue polypeptide: Teretoxin Tan6.14 (96 aa).

A signal peptide spans 1-21; that stretch reads MRPLLVFVLMVSVSLAFSLEG. Positions 22–60 are excised as a propeptide; the sequence is MPNNGGDSVASITANQARRFKRNPLFSFAQHSLVDLKAR.

In terms of processing, contains 3 disulfide bonds. Expressed by the venom duct.

It is found in the secreted. This is Teretoxin Tan6.14 from Terebra anilis (Auger snail).